We begin with the raw amino-acid sequence, 342 residues long: MGEMKSMQMGVIGALFLSVASSVSIVICNKALMTNLGFPFATTLTSWHLMVTYCTLHVAYKLNFFENKPIDMRTVVLFGLLNGISIGLLNLSLGFNSIGFYQMTKLAIIPFTVLLETLFLNKKFSQKIKFSLFLLLVGVGIASITDLQLNFVGSVLSLLAIATTCVGQILTNTIQKRLNVTSTQLLYQSAPFQAAILFVSGPFVDKYLTSLNVFSFHYSPIVVGFITLSCLIAVSVNFSTFLVIGKTSPVTYQVLGHLKTCLVLAFGYTLLHDPFTPRNIAGILIAVLGMLLYSYFCSVASKSKQASSDSTFLGKDRDTTPLLGQENENHHEAKKLDKHSPV.

Helical transmembrane passes span 7-27 (MQMGVIGALFLSVASSVSIVI), 36-56 (LGFPFATTLTSWHLMVTYCTL), 75-95 (VVLFGLLNGISIGLLNLSLGF), 100-120 (FYQMTKLAIIPFTVLLETLFL), 132-152 (LFLLLVGVGIASITDLQLNFV), 154-174 (SVLSLLAIATTCVGQILTNTI), 184-204 (QLLYQSAPFQAAILFVSGPFV), 221-241 (IVVGFITLSCLIAVSVNFSTF), 250-270 (VTYQVLGHLKTCLVLAFGYTL), and 280-300 (IAGILIAVLGMLLYSYFCSVA). Residues 305–342 (QASSDSTFLGKDRDTTPLLGQENENHHEAKKLDKHSPV) form a disordered region. Over residues 327-342 (NENHHEAKKLDKHSPV) the composition is skewed to basic and acidic residues.

The protein belongs to the TPT transporter family. TPT (TC 2.A.7.9) subfamily. Ubiquitous.

It is found in the golgi apparatus membrane. The protein localises to the endoplasmic reticulum membrane. Nucleotide-sugar transporter that transports UDP-xylose and UMP in a strict counter-exchange mode. The polypeptide is UDP-xylose transporter 1 (Arabidopsis thaliana (Mouse-ear cress)).